Reading from the N-terminus, the 28-residue chain is 14-3-3-like protein 4 (28 aa).

Belongs to the 14-3-3 family.

The chain is 14-3-3-like protein 4 from Pseudotsuga menziesii (Douglas-fir).